The following is a 389-amino-acid chain: GDSL esterase/lipase At1g28570 (389 aa).

The N-terminal stretch at 1–25 is a signal peptide; sequence MATLFMKLVSFFLILSTFCLTTVNS. S41 (nucleophile) is an active-site residue. Residues N137 and N319 are each glycosylated (N-linked (GlcNAc...) asparagine). Active-site residues include D344 and H347.

It belongs to the 'GDSL' lipolytic enzyme family.

It is found in the secreted. This Arabidopsis thaliana (Mouse-ear cress) protein is GDSL esterase/lipase At1g28570.